The primary structure comprises 293 residues: 4-hydroxy-tetrahydrodipicolinate synthase (293 aa).

Threonine 44 provides a ligand contact to pyruvate. The active-site Proton donor/acceptor is tyrosine 132. The active-site Schiff-base intermediate with substrate is the lysine 161. Residue isoleucine 203 coordinates pyruvate.

Belongs to the DapA family. In terms of assembly, homotetramer; dimer of dimers.

It localises to the cytoplasm. It carries out the reaction L-aspartate 4-semialdehyde + pyruvate = (2S,4S)-4-hydroxy-2,3,4,5-tetrahydrodipicolinate + H2O + H(+). The protein operates within amino-acid biosynthesis; L-lysine biosynthesis via DAP pathway; (S)-tetrahydrodipicolinate from L-aspartate: step 3/4. Catalyzes the condensation of (S)-aspartate-beta-semialdehyde [(S)-ASA] and pyruvate to 4-hydroxy-tetrahydrodipicolinate (HTPA). This is 4-hydroxy-tetrahydrodipicolinate synthase from Sulfurihydrogenibium sp. (strain YO3AOP1).